Here is a 387-residue protein sequence, read N- to C-terminus: Succinate--CoA ligase [ADP-forming] subunit beta (387 aa).

Positions 9 to 236 (KELFAKHNVP…RDATDPLELK (228 aa)) constitute an ATP-grasp domain. ATP contacts are provided by residues Lys-45, 52 to 54 (GRG), Ser-94, and Glu-99. Residues Asn-191 and Asp-205 each contribute to the Mg(2+) site. Substrate is bound by residues Asn-256 and 318 to 320 (GIT).

This sequence belongs to the succinate/malate CoA ligase beta subunit family. In terms of assembly, heterotetramer of two alpha and two beta subunits. The cofactor is Mg(2+).

The enzyme catalyses succinate + ATP + CoA = succinyl-CoA + ADP + phosphate. The catalysed reaction is GTP + succinate + CoA = succinyl-CoA + GDP + phosphate. Its pathway is carbohydrate metabolism; tricarboxylic acid cycle; succinate from succinyl-CoA (ligase route): step 1/1. In terms of biological role, succinyl-CoA synthetase functions in the citric acid cycle (TCA), coupling the hydrolysis of succinyl-CoA to the synthesis of either ATP or GTP and thus represents the only step of substrate-level phosphorylation in the TCA. The beta subunit provides nucleotide specificity of the enzyme and binds the substrate succinate, while the binding sites for coenzyme A and phosphate are found in the alpha subunit. The chain is Succinate--CoA ligase [ADP-forming] subunit beta from Mycobacterium sp. (strain JLS).